Reading from the N-terminus, the 562-residue chain is Urocanate hydratase (562 aa).

NAD(+) is bound by residues 53–54, Gln131, 177–179, Glu197, Arg202, 243–244, 268–272, 278–279, and Tyr327; these read GG, GMG, NA, QTSAH, and YL. Cys415 is a catalytic residue. Residue Gly497 participates in NAD(+) binding.

It belongs to the urocanase family. The cofactor is NAD(+).

The protein localises to the cytoplasm. The catalysed reaction is 4-imidazolone-5-propanoate = trans-urocanate + H2O. It functions in the pathway amino-acid degradation; L-histidine degradation into L-glutamate; N-formimidoyl-L-glutamate from L-histidine: step 2/3. In terms of biological role, catalyzes the conversion of urocanate to 4-imidazolone-5-propionate. The chain is Urocanate hydratase from Chelativorans sp. (strain BNC1).